Reading from the N-terminus, the 396-residue chain is L-lactate dehydrogenase (396 aa).

The 380-residue stretch at 1-380 (MIISAASDYR…SRDSLVQELG (380 aa)) folds into the FMN hydroxy acid dehydrogenase domain. Position 24 (Tyr-24) interacts with substrate. Positions 106 and 127 each coordinate FMN. Tyr-129 is a substrate binding site. An FMN-binding site is contributed by Thr-155. A substrate-binding site is contributed by Arg-164. Residue Lys-251 participates in FMN binding. His-275 (proton acceptor) is an active-site residue. Substrate is bound at residue Arg-278. An FMN-binding site is contributed by 306–330 (DSGIRNGLDVVRMIALGADSVLLGR).

The protein belongs to the FMN-dependent alpha-hydroxy acid dehydrogenase family. FMN serves as cofactor.

It is found in the cell inner membrane. It carries out the reaction (S)-lactate + A = pyruvate + AH2. Catalyzes the conversion of L-lactate to pyruvate. Is coupled to the respiratory chain. The sequence is that of L-lactate dehydrogenase from Citrobacter koseri (strain ATCC BAA-895 / CDC 4225-83 / SGSC4696).